We begin with the raw amino-acid sequence, 432 residues long: Adenylosuccinate synthetase (432 aa).

Residues 13–19 (GDEGKGK) and 41–43 (GHT) each bind GTP. Asp-14 (proton acceptor) is an active-site residue. Residues Asp-14 and Gly-41 each coordinate Mg(2+). IMP-binding positions include 14–17 (DEGK), 39–42 (NAGH), Thr-130, Arg-144, Gln-225, Thr-240, and Arg-304. The active-site Proton donor is His-42. 300–306 (ATTGRRR) provides a ligand contact to substrate. GTP contacts are provided by residues Arg-306, 332–334 (KLD), and 415–417 (STG).

This sequence belongs to the adenylosuccinate synthetase family. Homodimer. The cofactor is Mg(2+).

It is found in the cytoplasm. It catalyses the reaction IMP + L-aspartate + GTP = N(6)-(1,2-dicarboxyethyl)-AMP + GDP + phosphate + 2 H(+). It functions in the pathway purine metabolism; AMP biosynthesis via de novo pathway; AMP from IMP: step 1/2. Plays an important role in the de novo pathway of purine nucleotide biosynthesis. Catalyzes the first committed step in the biosynthesis of AMP from IMP. The protein is Adenylosuccinate synthetase of Klebsiella pneumoniae subsp. pneumoniae (strain ATCC 700721 / MGH 78578).